The sequence spans 200 residues: Dual-action ribosomal maturation protein DarP (200 aa).

Disordered regions lie at residues 1 to 25 and 177 to 200; these read MTRK…DRPS and TASG…DDEA. The segment covering 12–25 has biased composition (basic and acidic residues); that stretch reads HAAEVDDNGYDRPS. Residues 184–200 are compositionally biased toward acidic residues; it reads GDDEAADEAGDDHDDEA.

This sequence belongs to the DarP family.

The protein resides in the cytoplasm. Its function is as follows. Member of a network of 50S ribosomal subunit biogenesis factors which assembles along the 30S-50S interface, preventing incorrect 23S rRNA structures from forming. Promotes peptidyl transferase center (PTC) maturation. The sequence is that of Dual-action ribosomal maturation protein DarP from Burkholderia ambifaria (strain MC40-6).